Here is a 546-residue protein sequence, read N- to C-terminus: MNPNTKIIFVTGGVVSSLGKGVTAASLATLLESRGLNVTMMKLDPYINVDPGTMSPLQHGEVFVTEDGAETDLDLGHYERFIRNKMTQASNFTTGKVYQSVLRRERKGDYLGATIQVIPHITDEIKRRVCEGIAEDVDVAIVEIGGTVGDIESQPFLEAIRQLRIELGRNRTLFVHLTLLPYIRVAGELKTKPTQHSVKELRGIGIQADVLVCRCEKRFDDSEKRKIALFTNVDQDCIFTAEDVDTIYEVPLRYNQQGFDAKLVELLNLNTKEADLSEWQNVVNTIRSTKGEVTIAMVGKYVSLTEAYKSLNEALYNAGYKNGVKVKIKFVDSEEVNDTNVESFFNDADAILVPGGFGSRGVEGKIASIKYARENQIPFLGICLGMQLAVVEYARNVLGIQDAHSSELNPSTTNPVIGLITEWQAEDGTIHQRTHDSDLGGTMRLGGYRCVLKAGSRAREIYQADEVIERHRHRYEVNNNYVDRLEDAGLIFSGRSEDNKLMELIEIPEHKWFIACQAHPEFTSTPRYGHKLFESYIHAAVEKSNK.

The tract at residues 1–269 is amidoligase domain; it reads MNPNTKIIFV…DAKLVELLNL (269 aa). Position 16 (Ser-16) interacts with CTP. Ser-16 provides a ligand contact to UTP. ATP contacts are provided by residues 17 to 22 and Asp-74; that span reads SLGKGV. The Mg(2+) site is built by Asp-74 and Glu-143. CTP-binding positions include 150–152, 190–195, and Lys-226; these read DIE and KTKPTQ. UTP-binding positions include 190–195 and Lys-226; that span reads KTKPTQ. The region spanning 294-546 is the Glutamine amidotransferase type-1 domain; that stretch reads TIAMVGKYVS…IHAAVEKSNK (253 aa). Gly-356 contacts L-glutamine. The active-site Nucleophile; for glutamine hydrolysis is the Cys-383. L-glutamine contacts are provided by residues 384 to 387, Glu-407, and Arg-474; that span reads LGMQ. Residues His-519 and Glu-521 contribute to the active site.

This sequence belongs to the CTP synthase family. Homotetramer.

It catalyses the reaction UTP + L-glutamine + ATP + H2O = CTP + L-glutamate + ADP + phosphate + 2 H(+). The catalysed reaction is L-glutamine + H2O = L-glutamate + NH4(+). The enzyme catalyses UTP + NH4(+) + ATP = CTP + ADP + phosphate + 2 H(+). The protein operates within pyrimidine metabolism; CTP biosynthesis via de novo pathway; CTP from UDP: step 2/2. Its activity is regulated as follows. Allosterically activated by GTP, when glutamine is the substrate; GTP has no effect on the reaction when ammonia is the substrate. The allosteric effector GTP functions by stabilizing the protein conformation that binds the tetrahedral intermediate(s) formed during glutamine hydrolysis. Inhibited by the product CTP, via allosteric rather than competitive inhibition. Its function is as follows. Catalyzes the ATP-dependent amination of UTP to CTP with either L-glutamine or ammonia as the source of nitrogen. Regulates intracellular CTP levels through interactions with the four ribonucleotide triphosphates. This Francisella philomiragia subsp. philomiragia (strain ATCC 25017 / CCUG 19701 / FSC 153 / O#319-036) protein is CTP synthase.